We begin with the raw amino-acid sequence, 213 residues long: CDP-diacylglycerol--inositol 3-phosphatidyltransferase (213 aa).

Residues 1 to 5 (MPEEN) are Cytoplasmic-facing. The chain crosses the membrane as a helical span at residues 6-26 (IFLFVPNLIGYARIVFAIISF). A topological domain (lumenal) is located at residue Tyr27. The helical transmembrane segment at 28-48 (FMPCCPFTASSFYLLSGLLDA) threads the bilayer. Mg(2+) is bound by residues Asp47 and Asp50. The Cytoplasmic portion of the chain corresponds to 49–73 (FDGHAARALNQGTRFGAMLDMLTDR). Gly51, Arg55, and Thr61 together coordinate a CDP-1,2-diacyl-sn-glycerol. Positions 68 and 72 each coordinate Mg(2+). The active-site Proton acceptor is the Asp72. The chain crosses the membrane as a helical span at residues 74–94 (CATMCLLVNLALLYPRATLLF). A topological domain (lumenal) is located at residue Gln95. Residues 96–116 (LSMSLDVASHWLHLHSSVVRG) traverse the membrane as a helical segment. The Cytoplasmic segment spans residues 117 to 139 (SESHKMIDLSGNPVLRIYYTSRP). A helical transmembrane segment spans residues 140–160 (ALFTLCAGNELFYCLLYLFNF). The Lumenal portion of the chain corresponds to 161-174 (SEGPLVGSVGLFRM). Residues 175–195 (GLWVTAPIALLKSVISVIHLI) form a helical membrane-spanning segment. The Cytoplasmic segment spans residues 196 to 213 (TAARNMAALDAADRAKKK).

The protein belongs to the CDP-alcohol phosphatidyltransferase class-I family. Mn(2+) is required as a cofactor. The cofactor is Mg(2+).

Its subcellular location is the endoplasmic reticulum membrane. It localises to the cell membrane. The catalysed reaction is a CDP-1,2-diacyl-sn-glycerol + myo-inositol = a 1,2-diacyl-sn-glycero-3-phospho-(1D-myo-inositol) + CMP + H(+). Catalyzes the biosynthesis of phosphatidylinositol (PtdIns) as well as PtdIns:inositol exchange reaction. May thus act to reduce an excessive cellular PtdIns content. The exchange activity is due to the reverse reaction of PtdIns synthase and is dependent on CMP, which is tightly bound to the enzyme. This Mus musculus (Mouse) protein is CDP-diacylglycerol--inositol 3-phosphatidyltransferase.